The following is a 328-amino-acid chain: MIIQTPSRIHMGLIDLNGSIGRVDGGIGLALEEPNIKIEGKESDDISIEFDKKLIEKYGEDYIKSVRDRVYNTAIKVLDVIGGEGVDLKILSLFPAHSGLGSGTQLSLAVGKLISKIYNKEMNAYNIAKITGRGGTSGIGIGAFEYGGFLIDGGHSFGKGKDKEDFRPSSASKGVKPAPIIFRHDFDWETILIIPKGEHVYGKKEVDIFKKYCPVPLNEVEKICHLVLMKMMPAVVEKNLDDFGEVINKLQYLGFKKVELSLQSDIVKDLINELHKDVYAGLSSFGPTIYAFGDKKLIVEKANDIFDKYGVYGEIIITKANNVGHKIW.

It belongs to the beta-RFA-P synthase family. As to quaternary structure, homodimer. It depends on Mg(2+) as a cofactor.

The catalysed reaction is 5-phospho-alpha-D-ribose 1-diphosphate + 4-hydroxybenzoate + H(+) = 4-(beta-D-ribofuranosyl)phenol 5'-phosphate + CO2 + diphosphate. It catalyses the reaction 4-aminobenzoate + 5-phospho-alpha-D-ribose 1-diphosphate + H(+) = 4-(beta-D-ribofuranosyl)aminobenzene 5'-phosphate + CO2 + diphosphate. It functions in the pathway cofactor biosynthesis; 5,6,7,8-tetrahydromethanopterin biosynthesis. Its function is as follows. Catalyzes the condensation of 4-hydroxybenzoate (HB) with 5-phospho-alpha-D-ribose 1-diphosphate (PRPP) to produce beta-ribofuranosylphenol 5'-phosphate (beta-RFH-P). Also catalyzes the condensation of 4-aminobenzoate (pABA) with PRPP to produce beta-ribofuranosylaminobenzene 5'-phosphate (beta-RFA-P). Only 4-hydroxybenzoate is known to be biosynthesized by methanogenic archaea, but 4-aminobenzoate can be used as substrate by growing methanogens when it is present in the growth medium. The protein is Beta-ribofuranosylphenol 5'-phosphate synthase of Methanocaldococcus jannaschii (strain ATCC 43067 / DSM 2661 / JAL-1 / JCM 10045 / NBRC 100440) (Methanococcus jannaschii).